A 298-amino-acid chain; its full sequence is Glutamyl-Q tRNA(Asp) synthetase (298 aa).

L-glutamate contacts are provided by residues 9-13 and glutamate 45; that span reads RFAPS. The 'HIGH' region motif lies at 12–22; sequence PSPSGELHFGS. 4 residues coordinate Zn(2+): cysteine 101, cysteine 103, tyrosine 115, and cysteine 119. L-glutamate-binding residues include tyrosine 172 and arginine 190. The short motif at 228 to 232 is the 'KMSKS' region element; it reads KLSKQ. Residue lysine 231 participates in ATP binding.

This sequence belongs to the class-I aminoacyl-tRNA synthetase family. GluQ subfamily. Requires Zn(2+) as cofactor.

In terms of biological role, catalyzes the tRNA-independent activation of glutamate in presence of ATP and the subsequent transfer of glutamate onto a tRNA(Asp). Glutamate is transferred on the 2-amino-5-(4,5-dihydroxy-2-cyclopenten-1-yl) moiety of the queuosine in the wobble position of the QUC anticodon. The polypeptide is Glutamyl-Q tRNA(Asp) synthetase (Salmonella typhimurium (strain LT2 / SGSC1412 / ATCC 700720)).